Consider the following 486-residue polypeptide: uncharacterized protein (486 aa).

A helical membrane pass occupies residues 18–38 (TLLQLFVFTVICVFVLSGLAI). The span at 62-79 (DRQKQMEKQQDSGEKRSF) shows a compositional bias: basic and acidic residues. Disordered stretches follow at residues 62-82 (DRQK…FEST) and 117-147 (IESS…GPQM). Residues 119-132 (SSSSSDSSSSSSSS) show a composition bias toward low complexity. Helical transmembrane passes span 324-344 (VVYL…MMSI), 365-385 (IGQF…LASV), and 451-471 (MLIL…LPSI).

It belongs to the ABC-4 integral membrane protein family.

Its subcellular location is the cell membrane. This is an uncharacterized protein from Bacillus subtilis (strain 168).